We begin with the raw amino-acid sequence, 732 residues long: Ribosomal RNA large subunit methyltransferase K/L (732 aa).

Residues 50–162 (MAYRICLWSR…RGRLLLGLDL (113 aa)) enclose the THUMP domain. The interval 396 to 424 (TERETSSEGDEPQGASGATSRPGPRNDGA) is disordered.

It belongs to the methyltransferase superfamily. RlmKL family.

Its subcellular location is the cytoplasm. It catalyses the reaction guanosine(2445) in 23S rRNA + S-adenosyl-L-methionine = N(2)-methylguanosine(2445) in 23S rRNA + S-adenosyl-L-homocysteine + H(+). The catalysed reaction is guanosine(2069) in 23S rRNA + S-adenosyl-L-methionine = N(2)-methylguanosine(2069) in 23S rRNA + S-adenosyl-L-homocysteine + H(+). In terms of biological role, specifically methylates the guanine in position 2445 (m2G2445) and the guanine in position 2069 (m7G2069) of 23S rRNA. This chain is Ribosomal RNA large subunit methyltransferase K/L, found in Chromohalobacter salexigens (strain ATCC BAA-138 / DSM 3043 / CIP 106854 / NCIMB 13768 / 1H11).